A 371-amino-acid chain; its full sequence is Galanin receptor type 2 (371 aa).

Topologically, residues 1–27 (MNGSDSQGAEDSSQEGGGGWQPEAVLV) are extracellular. N-linked (GlcNAc...) asparagine glycosylation occurs at Asn2. The chain crosses the membrane as a helical span at residues 28–48 (PLFFALIFLVGAVGNALVLAV). Topologically, residues 49 to 59 (LLRGGQAVSTT) are cytoplasmic. A helical membrane pass occupies residues 60–80 (NLFILNLGVADLCFILCCVPF). The Extracellular portion of the chain corresponds to 81–98 (QATIYTLDDWVFGSLLCK). The cysteines at positions 97 and 174 are disulfide-linked. A helical transmembrane segment spans residues 99–120 (AVHFLIFLTMHASSFTLAAVSL). Topologically, residues 121–140 (DRYLAIRYPLHSRELRTPRN) are cytoplasmic. A helical membrane pass occupies residues 141 to 161 (ALAAIGLIWGLALLFSGPYLS). The Extracellular segment spans residues 162–186 (YYSQSQLANLTVCHPAWSAPRRRAM). Residues 187–207 (DLCTFVFSYLLPVLVLSLTYA) traverse the membrane as a helical segment. Over 208–236 (RTLHYLWRTVDPVAAGSGSQRAKRKVTRM) the chain is Cytoplasmic. A helical transmembrane segment spans residues 237–257 (IVIVAVLFCLCWMPHHALILC). Residues 258 to 259 (VW) lie on the Extracellular side of the membrane. The helical transmembrane segment at 260–280 (FGRFPLTRATYALRILSHLVS) threads the bilayer. At 281 to 371 (YANSCVNPIV…TLSRTLDPAC (91 aa)) the chain is on the cytoplasmic side.

Belongs to the G-protein coupled receptor 1 family.

It is found in the cell membrane. Receptor for the hormone galanin, GALP and spexin-1. The activity of this receptor is mediated by G proteins that activate the phospholipase C/protein kinase C pathway (via G(q)) and that inhibit adenylyl cyclase (via G(i)). This chain is Galanin receptor type 2 (Galr2), found in Mus musculus (Mouse).